The following is a 930-amino-acid chain: Translation initiation factor IF-2 (930 aa).

Positions 50-67 are enriched in low complexity; that stretch reads FKPAAAPKVEAKPAAPKV. 2 disordered regions span residues 50–196 and 260–346; these read FKPA…RIDF and EVVP…HELP. Composition is skewed to basic and acidic residues over residues 68 to 90 and 110 to 125; these read SAEK…EAKP and FKAE…AERR. Residues 129–141 are compositionally biased toward low complexity; it reads KGNNRDQQQNGNR. 2 stretches are compositionally biased toward basic and acidic residues: residues 157 to 172 and 262 to 295; these read RDNR…EQGQ and VPEK…DGPR. Low complexity predominate over residues 309-318; the sequence is NQKNSNWNNN. Basic and acidic residues predominate over residues 337–346; it reads VTERKFHELP. Residues 432–599 form the tr-type G domain; it reads ERPPVVTIMG…TVLLVAEIQE (168 aa). The segment at 441–448 is G1; it reads GHVDHGKT. Residue 441–448 participates in GTP binding; it reads GHVDHGKT. The tract at residues 466 to 470 is G2; the sequence is GITQH. Positions 487–490 are G3; sequence DTPG. GTP-binding positions include 487 to 491 and 541 to 544; these read DTPGH and NKID. The tract at residues 541–544 is G4; sequence NKID. The tract at residues 577–579 is G5; the sequence is SAK.

It belongs to the TRAFAC class translation factor GTPase superfamily. Classic translation factor GTPase family. IF-2 subfamily.

The protein localises to the cytoplasm. Its function is as follows. One of the essential components for the initiation of protein synthesis. Protects formylmethionyl-tRNA from spontaneous hydrolysis and promotes its binding to the 30S ribosomal subunits. Also involved in the hydrolysis of GTP during the formation of the 70S ribosomal complex. The chain is Translation initiation factor IF-2 from Streptococcus pneumoniae serotype 19F (strain G54).